A 454-amino-acid polypeptide reads, in one-letter code: Gastrin/cholecystokinin type B receptor (454 aa).

The Extracellular portion of the chain corresponds to 1–57 (MELLKPNRSVLGSGPGPGASLCRSGGPLLNGSGTGNLSCEPPRIRGAGTRELELAIR). Asn-7, Asn-30, and Asn-36 each carry an N-linked (GlcNAc...) asparagine glycan. Residues 58–79 (VTLYAVIFLMSVGGNVLIIVVL) traverse the membrane as a helical segment. Residues 80-87 (GLSRRLRT) are Cytoplasmic-facing. Residues 88-109 (VTNAFLLSLAVSDLLLAVACMP) form a helical membrane-spanning segment. Residues 110-131 (FTLLPNLMGTFIFGTVVCKAVS) lie on the Extracellular side of the membrane. A disulfide bridge connects residues Cys-127 and Cys-205. A helical membrane pass occupies residues 132–150 (YFMGVSVSVSTLSLVAIAL). Topologically, residues 151-170 (ERYSAICRPLQARVWQTRSH) are cytoplasmic. Residues 171–189 (AARVIVATWMLSGLLMVPY) form a helical membrane-spanning segment. Residues 190–219 (PVYTAVQPAGPRVLQCMHRWPSARVRQTWS) are Extracellular-facing. The helical transmembrane segment at 220–242 (VLLLLLLFFVPGVVMAVAYGLIS) threads the bilayer. The Cytoplasmic segment spans residues 243–340 (RELYLGLRFD…KLLAKKRVVR (98 aa)). Residues 257–284 (SESQSRVGSQGGLPGGTGQGPAQANGRC) form a disordered region. Gly residues predominate over residues 265–275 (SQGGLPGGTGQ). Residues 341 to 362 (MLLVIVVLFFLCWLPVYSANTW) traverse the membrane as a helical segment. The Extracellular segment spans residues 363 to 380 (RAFDGPGAHRALSGAPIS). Residues 381–401 (FIHLLTYASACVNPLVYCFMH) form a helical membrane-spanning segment. At 402-454 (RRFRQACLDTCTRCCPRPPRARPRPLPDEDPPTPSIASLSRLSYTTISTLGPG) the chain is on the cytoplasmic side. A lipid anchor (S-palmitoyl cysteine) is attached at Cys-415. The disordered stretch occupies residues 422 to 441 (ARPRPLPDEDPPTPSIASLS).

It belongs to the G-protein coupled receptor 1 family.

The protein resides in the cell membrane. Its function is as follows. Receptor for gastrin and cholecystokinin. The CCK-B receptors occur throughout the central nervous system where they modulate anxiety, analgesia, arousal, and neuroleptic activity. This receptor mediates its action by association with G proteins that activate a phosphatidylinositol-calcium second messenger system. In Bos taurus (Bovine), this protein is Gastrin/cholecystokinin type B receptor (CCKBR).